The chain runs to 313 residues: Ribosomal RNA small subunit methyltransferase H (313 aa).

Residues G35 to H37, D55, F79, D100, and Q107 each bind S-adenosyl-L-methionine.

The protein belongs to the methyltransferase superfamily. RsmH family.

The protein resides in the cytoplasm. The enzyme catalyses cytidine(1402) in 16S rRNA + S-adenosyl-L-methionine = N(4)-methylcytidine(1402) in 16S rRNA + S-adenosyl-L-homocysteine + H(+). In terms of biological role, specifically methylates the N4 position of cytidine in position 1402 (C1402) of 16S rRNA. This Burkholderia vietnamiensis (strain G4 / LMG 22486) (Burkholderia cepacia (strain R1808)) protein is Ribosomal RNA small subunit methyltransferase H.